The sequence spans 210 residues: Large ribosomal subunit protein uL4 (210 aa).

Over residues 41 to 51 (ANARQGTQSTK) the composition is skewed to polar residues. 2 disordered regions span residues 41–60 (ANAR…QGSS) and 67–98 (KGTG…DFSK).

It belongs to the universal ribosomal protein uL4 family. As to quaternary structure, part of the 50S ribosomal subunit.

Functionally, one of the primary rRNA binding proteins, this protein initially binds near the 5'-end of the 23S rRNA. It is important during the early stages of 50S assembly. It makes multiple contacts with different domains of the 23S rRNA in the assembled 50S subunit and ribosome. Forms part of the polypeptide exit tunnel. This is Large ribosomal subunit protein uL4 from Dehalococcoides mccartyi (strain ATCC BAA-2100 / JCM 16839 / KCTC 5957 / BAV1).